A 902-amino-acid polypeptide reads, in one-letter code: Protein translocase subunit SecA (902 aa).

ATP-binding positions include Gln-87, 105–109, and Asp-512; that span reads GEGKT. Residues 851-902 form a disordered region; that stretch reads LARQQQLSHQAPVEELTQGSAAAAQEGRKVGRNDPCPCGSGKKFKHCHGKLQ. Residues Cys-886, Cys-888, Cys-897, and His-898 each coordinate Zn(2+). The segment covering 892–902 has biased composition (basic residues); it reads KKFKHCHGKLQ.

This sequence belongs to the SecA family. Monomer and homodimer. Part of the essential Sec protein translocation apparatus which comprises SecA, SecYEG and auxiliary proteins SecDF-YajC and YidC. It depends on Zn(2+) as a cofactor.

It is found in the cell inner membrane. Its subcellular location is the cytoplasm. The enzyme catalyses ATP + H2O + cellular proteinSide 1 = ADP + phosphate + cellular proteinSide 2.. Part of the Sec protein translocase complex. Interacts with the SecYEG preprotein conducting channel. Has a central role in coupling the hydrolysis of ATP to the transfer of proteins into and across the cell membrane, serving both as a receptor for the preprotein-SecB complex and as an ATP-driven molecular motor driving the stepwise translocation of polypeptide chains across the membrane. In Sodalis glossinidius (strain morsitans), this protein is Protein translocase subunit SecA.